Here is a 139-residue protein sequence, read N- to C-terminus: Small ribosomal subunit protein uS12 (139 aa).

A disordered region spans residues 118–139; that stretch reads AGVANRNQSRSRYGTKKPKPKS. The segment covering 130 to 139 has biased composition (basic residues); it reads YGTKKPKPKS.

The protein belongs to the universal ribosomal protein uS12 family. In terms of assembly, part of the 30S ribosomal subunit. Contacts proteins S8 and S17. May interact with IF1 in the 30S initiation complex.

In terms of biological role, with S4 and S5 plays an important role in translational accuracy. Its function is as follows. Interacts with and stabilizes bases of the 16S rRNA that are involved in tRNA selection in the A site and with the mRNA backbone. Located at the interface of the 30S and 50S subunits, it traverses the body of the 30S subunit contacting proteins on the other side and probably holding the rRNA structure together. The combined cluster of proteins S8, S12 and S17 appears to hold together the shoulder and platform of the 30S subunit. This chain is Small ribosomal subunit protein uS12, found in Mycoplasma mobile (strain ATCC 43663 / 163K / NCTC 11711) (Mesomycoplasma mobile).